The chain runs to 278 residues: Indole-3-glycerol phosphate synthase (278 aa).

Belongs to the TrpC family.

The enzyme catalyses 1-(2-carboxyphenylamino)-1-deoxy-D-ribulose 5-phosphate + H(+) = (1S,2R)-1-C-(indol-3-yl)glycerol 3-phosphate + CO2 + H2O. The protein operates within amino-acid biosynthesis; L-tryptophan biosynthesis; L-tryptophan from chorismate: step 4/5. The polypeptide is Indole-3-glycerol phosphate synthase (Pseudomonas paraeruginosa (strain DSM 24068 / PA7) (Pseudomonas aeruginosa (strain PA7))).